The following is a 509-amino-acid chain: Kynureninase 1 (509 aa).

Residues leucine 154, threonine 155, 183-186 (FPSD), aspartate 270, histidine 273, and tyrosine 295 contribute to the pyridoxal 5'-phosphate site. Lysine 296 carries the N6-(pyridoxal phosphate)lysine modification. Tryptophan 345 and asparagine 373 together coordinate pyridoxal 5'-phosphate.

This sequence belongs to the kynureninase family. In terms of assembly, homodimer. The cofactor is pyridoxal 5'-phosphate.

It localises to the cytoplasm. It carries out the reaction L-kynurenine + H2O = anthranilate + L-alanine + H(+). The enzyme catalyses 3-hydroxy-L-kynurenine + H2O = 3-hydroxyanthranilate + L-alanine + H(+). It participates in amino-acid degradation; L-kynurenine degradation; L-alanine and anthranilate from L-kynurenine: step 1/1. Its pathway is cofactor biosynthesis; NAD(+) biosynthesis; quinolinate from L-kynurenine: step 2/3. Its function is as follows. Catalyzes the cleavage of L-kynurenine (L-Kyn) and L-3-hydroxykynurenine (L-3OHKyn) into anthranilic acid (AA) and 3-hydroxyanthranilic acid (3-OHAA), respectively. This is Kynureninase 1 from Chaetomium globosum (strain ATCC 6205 / CBS 148.51 / DSM 1962 / NBRC 6347 / NRRL 1970) (Soil fungus).